Here is a 286-residue protein sequence, read N- to C-terminus: Ribose-5-phosphate isomerase (286 aa).

The protein belongs to the ribose 5-phosphate isomerase family.

The protein resides in the cytoplasm. It catalyses the reaction aldehydo-D-ribose 5-phosphate = D-ribulose 5-phosphate. It functions in the pathway carbohydrate degradation; pentose phosphate pathway; D-ribose 5-phosphate from D-ribulose 5-phosphate (non-oxidative stage): step 1/1. In Mycosarcoma maydis (Corn smut fungus), this protein is Ribose-5-phosphate isomerase (RKI1).